The following is a 148-amino-acid chain: Ribosome maturation factor RimP (148 aa).

This sequence belongs to the RimP family.

The protein resides in the cytoplasm. Its function is as follows. Required for maturation of 30S ribosomal subunits. The sequence is that of Ribosome maturation factor RimP from Nautilia profundicola (strain ATCC BAA-1463 / DSM 18972 / AmH).